The primary structure comprises 234 residues: Large ribosomal subunit protein uL1c (234 aa).

This sequence belongs to the universal ribosomal protein uL1 family. Part of the 50S ribosomal subunit.

Its subcellular location is the plastid. The protein resides in the chloroplast. Binds directly to 23S rRNA. Might be involved in E site tRNA release (Potential). The protein is Large ribosomal subunit protein uL1c (rpl1) of Guillardia theta (Cryptophyte).